Consider the following 466-residue polypeptide: Cysteine--tRNA ligase (466 aa).

C27 lines the Zn(2+) pocket. The short motif at 29–39 (PTVYNYFHIGN) is the 'HIGH' region element. 3 residues coordinate Zn(2+): C207, H232, and E236. A 'KMSKS' region motif is present at residues 264-268 (KMSKS). K267 lines the ATP pocket.

It belongs to the class-I aminoacyl-tRNA synthetase family. In terms of assembly, monomer. Zn(2+) is required as a cofactor.

The protein resides in the cytoplasm. The enzyme catalyses tRNA(Cys) + L-cysteine + ATP = L-cysteinyl-tRNA(Cys) + AMP + diphosphate. This chain is Cysteine--tRNA ligase, found in Clostridium novyi (strain NT).